Reading from the N-terminus, the 465-residue chain is Eukaryotic translation initiation factor 3 subunit M (465 aa).

The 169-residue stretch at 215–383 (EEMSYNHVIL…GEFLVHRATY (169 aa)) folds into the PCI domain. The tract at residues 429-465 (AAAESGREGGARGGAGERRRGGGGHQGPREVDLVGGD) is disordered. 2 stretches are compositionally biased toward basic and acidic residues: residues 433–448 (SGRE…ERRR) and 455–465 (GPREVDLVGGD).

The protein belongs to the eIF-3 subunit M family. In terms of assembly, component of the eukaryotic translation initiation factor 3 (eIF-3) complex.

It is found in the cytoplasm. Functionally, component of the eukaryotic translation initiation factor 3 (eIF-3) complex, which is involved in protein synthesis of a specialized repertoire of mRNAs and, together with other initiation factors, stimulates binding of mRNA and methionyl-tRNAi to the 40S ribosome. The eIF-3 complex specifically targets and initiates translation of a subset of mRNAs involved in cell proliferation. This is Eukaryotic translation initiation factor 3 subunit M from Coccidioides immitis (strain RS) (Valley fever fungus).